Here is a 348-residue protein sequence, read N- to C-terminus: Fasciculation and elongation protein zeta-2 (348 aa).

The segment at 11–40 (YEFQEPAGSVQEQENCNASPEAGAGAHAGG) is disordered. A phosphoserine mark is found at serine 130, serine 171, and serine 190. Positions 206-280 (ERVKRLSVSE…TAKKKKKLKS (75 aa)) form a coiled coil. The tract at residues 265–296 (QKEHKETAKKKKKLKSGSSQNGRSERSHMPGT) is disordered.

It belongs to the zygin family. In terms of assembly, homodimer; disulfide-linked. May form heterodimers with FEZ1. Interacts with synaptotagmin.

Involved in axonal outgrowth and fasciculation. The polypeptide is Fasciculation and elongation protein zeta-2 (Fez2) (Mus musculus (Mouse)).